Reading from the N-terminus, the 132-residue chain is Small ribosomal subunit protein uS8 (132 aa).

The protein belongs to the universal ribosomal protein uS8 family. As to quaternary structure, part of the 30S ribosomal subunit. Contacts proteins S5 and S12.

One of the primary rRNA binding proteins, it binds directly to 16S rRNA central domain where it helps coordinate assembly of the platform of the 30S subunit. The sequence is that of Small ribosomal subunit protein uS8 from Enterococcus faecalis (strain ATCC 700802 / V583).